Reading from the N-terminus, the 318-residue chain is Potassium channel subfamily K member 15 (318 aa).

At 1-8 (MRKQSART) the chain is on the cytoplasmic side. Residues 9–29 (AALILCILSYLLVGAAVFDAL) traverse the membrane as a helical segment. An intramembrane region (pore-forming) is located at residues 80–101 (FAGSFYFAITVITTIGYGHAAP). A helical membrane pass occupies residues 108–128 (VFCMFYALLGIPLTLVTFQSL). The Cytoplasmic segment spans residues 129–158 (GERLNALVRCLLLAAKRCLGLRRPHVSAEN). A helical membrane pass occupies residues 159–179 (MVVAGLLLCAATLALGAAAFA). The pore-forming intramembrane region spans 189–209 (AYYYCFITLTTIGFGDFVALQ). The chain crosses the membrane as a helical span at residues 223–243 (FSFLYILLGLTVIGAFLNLVV). At 244–318 (LRFLASAEAP…DRLRARRKSI (75 aa)) the chain is on the cytoplasmic side. The tract at residues 296-318 (LSPEAVHDCHSSPDRLRARRKSI) is disordered. Positions 300–311 (AVHDCHSSPDRL) are enriched in basic and acidic residues.

The protein belongs to the two pore domain potassium channel (TC 1.A.1.8) family. Heterodimer. In terms of processing, phosphorylated. Brain-specific. Highly expressed in auditory nuclei, in Purkinje cells and in olfactory bulb mitral cells.

The protein localises to the membrane. Functionally, probable potassium channel subunit. No channel activity observed in heterologous systems. May need to associate with another protein to form a functional channel. In Rattus norvegicus (Rat), this protein is Potassium channel subfamily K member 15 (Kcnk15).